Reading from the N-terminus, the 191-residue chain is Peptidyl-tRNA hydrolase (191 aa).

Residue tyrosine 17 coordinates tRNA. Histidine 22 functions as the Proton acceptor in the catalytic mechanism. TRNA contacts are provided by tyrosine 68, asparagine 70, and asparagine 116.

It belongs to the PTH family. As to quaternary structure, monomer.

It localises to the cytoplasm. The enzyme catalyses an N-acyl-L-alpha-aminoacyl-tRNA + H2O = an N-acyl-L-amino acid + a tRNA + H(+). Functionally, hydrolyzes ribosome-free peptidyl-tRNAs (with 1 or more amino acids incorporated), which drop off the ribosome during protein synthesis, or as a result of ribosome stalling. Catalyzes the release of premature peptidyl moieties from peptidyl-tRNA molecules trapped in stalled 50S ribosomal subunits, and thus maintains levels of free tRNAs and 50S ribosomes. In Mycobacterium tuberculosis (strain ATCC 25177 / H37Ra), this protein is Peptidyl-tRNA hydrolase.